The primary structure comprises 534 residues: Bifunctional purine biosynthesis protein PurH (534 aa).

The MGS-like domain maps to 6–151 (TRLPVRRALI…KNHKDVAIVV (146 aa)).

This sequence belongs to the PurH family.

The enzyme catalyses (6R)-10-formyltetrahydrofolate + 5-amino-1-(5-phospho-beta-D-ribosyl)imidazole-4-carboxamide = 5-formamido-1-(5-phospho-D-ribosyl)imidazole-4-carboxamide + (6S)-5,6,7,8-tetrahydrofolate. It catalyses the reaction IMP + H2O = 5-formamido-1-(5-phospho-D-ribosyl)imidazole-4-carboxamide. It functions in the pathway purine metabolism; IMP biosynthesis via de novo pathway; 5-formamido-1-(5-phospho-D-ribosyl)imidazole-4-carboxamide from 5-amino-1-(5-phospho-D-ribosyl)imidazole-4-carboxamide (10-formyl THF route): step 1/1. The protein operates within purine metabolism; IMP biosynthesis via de novo pathway; IMP from 5-formamido-1-(5-phospho-D-ribosyl)imidazole-4-carboxamide: step 1/1. The chain is Bifunctional purine biosynthesis protein PurH from Stutzerimonas stutzeri (strain A1501) (Pseudomonas stutzeri).